A 270-amino-acid chain; its full sequence is 4-hydroxy-tetrahydrodipicolinate reductase (270 aa).

NAD(+)-binding positions include 11–16 and E37; that span reads GASGRM. R38 contacts NADP(+). NAD(+) contacts are provided by residues 101–103 and 125–128; these read GTT and SPNM. H158 acts as the Proton donor/acceptor in catalysis. H159 is a binding site for (S)-2,3,4,5-tetrahydrodipicolinate. The Proton donor role is filled by K162. Position 168-169 (168-169) interacts with (S)-2,3,4,5-tetrahydrodipicolinate; the sequence is GT.

This sequence belongs to the DapB family.

The protein resides in the cytoplasm. It catalyses the reaction (S)-2,3,4,5-tetrahydrodipicolinate + NAD(+) + H2O = (2S,4S)-4-hydroxy-2,3,4,5-tetrahydrodipicolinate + NADH + H(+). The catalysed reaction is (S)-2,3,4,5-tetrahydrodipicolinate + NADP(+) + H2O = (2S,4S)-4-hydroxy-2,3,4,5-tetrahydrodipicolinate + NADPH + H(+). It functions in the pathway amino-acid biosynthesis; L-lysine biosynthesis via DAP pathway; (S)-tetrahydrodipicolinate from L-aspartate: step 4/4. Functionally, catalyzes the conversion of 4-hydroxy-tetrahydrodipicolinate (HTPA) to tetrahydrodipicolinate. This Shewanella denitrificans (strain OS217 / ATCC BAA-1090 / DSM 15013) protein is 4-hydroxy-tetrahydrodipicolinate reductase.